A 62-amino-acid polypeptide reads, in one-letter code: Toxin Ct28 (62 aa).

The signal sequence occupies residues 1 to 22 (MKAFYGILIILLFCSMFKLNES). 3 cysteine pairs are disulfide-bonded: Cys-29-Cys-51, Cys-35-Cys-56, and Cys-39-Cys-58. Asn-61 is subject to Asparagine amide.

The protein belongs to the short scorpion toxin superfamily. Potassium channel inhibitor family. Alpha-KTx 02 subfamily. Expressed by the venom gland.

The protein resides in the secreted. Functionally, blocks voltage-gated potassium channels. The protein is Toxin Ct28 of Centruroides tecomanus (Scorpion).